The primary structure comprises 271 residues: 4-hydroxy-tetrahydrodipicolinate reductase (271 aa).

Residues 10–15 (GAGGRM), glutamate 36, 100–102 (GTT), and 124–127 (SGNM) each bind NAD(+). Histidine 157 (proton donor/acceptor) is an active-site residue. Position 158 (histidine 158) interacts with (S)-2,3,4,5-tetrahydrodipicolinate. Residue lysine 161 is the Proton donor of the active site. 167–168 (GT) contributes to the (S)-2,3,4,5-tetrahydrodipicolinate binding site.

Belongs to the DapB family.

The protein localises to the cytoplasm. The enzyme catalyses (S)-2,3,4,5-tetrahydrodipicolinate + NAD(+) + H2O = (2S,4S)-4-hydroxy-2,3,4,5-tetrahydrodipicolinate + NADH + H(+). It catalyses the reaction (S)-2,3,4,5-tetrahydrodipicolinate + NADP(+) + H2O = (2S,4S)-4-hydroxy-2,3,4,5-tetrahydrodipicolinate + NADPH + H(+). The protein operates within amino-acid biosynthesis; L-lysine biosynthesis via DAP pathway; (S)-tetrahydrodipicolinate from L-aspartate: step 4/4. Its function is as follows. Catalyzes the conversion of 4-hydroxy-tetrahydrodipicolinate (HTPA) to tetrahydrodipicolinate. This is 4-hydroxy-tetrahydrodipicolinate reductase from Rhodopseudomonas palustris (strain HaA2).